The primary structure comprises 90 residues: Probable Fe(2+)-trafficking protein (90 aa).

Belongs to the Fe(2+)-trafficking protein family.

Its function is as follows. Could be a mediator in iron transactions between iron acquisition and iron-requiring processes, such as synthesis and/or repair of Fe-S clusters in biosynthetic enzymes. The sequence is that of Probable Fe(2+)-trafficking protein from Stutzerimonas stutzeri (strain A1501) (Pseudomonas stutzeri).